We begin with the raw amino-acid sequence, 683 residues long: DNA-directed RNA polymerase subunit beta' (683 aa).

Residues Cys69, Cys71, Cys87, and Cys90 each contribute to the Zn(2+) site. Residues Asp489, Asp491, and Asp493 each coordinate Mg(2+).

This sequence belongs to the RNA polymerase beta' chain family. RpoC1 subfamily. As to quaternary structure, in plastids the minimal PEP RNA polymerase catalytic core is composed of four subunits: alpha, beta, beta', and beta''. When a (nuclear-encoded) sigma factor is associated with the core the holoenzyme is formed, which can initiate transcription. The cofactor is Mg(2+). Zn(2+) is required as a cofactor.

The protein localises to the plastid. The protein resides in the chloroplast. The catalysed reaction is RNA(n) + a ribonucleoside 5'-triphosphate = RNA(n+1) + diphosphate. In terms of biological role, DNA-dependent RNA polymerase catalyzes the transcription of DNA into RNA using the four ribonucleoside triphosphates as substrates. The chain is DNA-directed RNA polymerase subunit beta' from Triticum aestivum (Wheat).